Here is a 360-residue protein sequence, read N- to C-terminus: Peptide chain release factor 1 (360 aa).

Q235 bears the N5-methylglutamine mark. Residues 285-311 form a disordered region; sequence KRQQAQASERRNLLGSGDRSDRHRTYN. Positions 292-308 are enriched in basic and acidic residues; that stretch reads SERRNLLGSGDRSDRHR.

Belongs to the prokaryotic/mitochondrial release factor family. Post-translationally, methylated by PrmC. Methylation increases the termination efficiency of RF1.

The protein localises to the cytoplasm. Its function is as follows. Peptide chain release factor 1 directs the termination of translation in response to the peptide chain termination codons UAG and UAA. In Hamiltonella defensa subsp. Acyrthosiphon pisum (strain 5AT), this protein is Peptide chain release factor 1.